We begin with the raw amino-acid sequence, 205 residues long: Ras-related protein RABC2b (205 aa).

20–27 (GDSGVGKS) is a binding site for GTP. The short motif at 41–49 (LAPTIGVDF) is the Effector region element. GTP-binding positions include 67–71 (DTAGQ), 127–130 (NKVD), and 157–158 (SA). 2 S-geranylgeranyl cysteine lipidation sites follow: Cys202 and Cys203.

Belongs to the small GTPase superfamily. Rab family.

The protein resides in the cell membrane. Functionally, intracellular vesicle trafficking and protein transport. The protein is Ras-related protein RABC2b (RABC2B) of Arabidopsis thaliana (Mouse-ear cress).